Reading from the N-terminus, the 224-residue chain is Redox-sensing transcriptional repressor Rex (224 aa).

The H-T-H motif DNA-binding region spans 17-56; it reads RYHRYLEELLKNDVKRISSRELSEKMGVTASQIRQDLNNF. An NAD(+)-binding site is contributed by 91 to 96; it reads GAGNLG.

The protein belongs to the transcriptional regulatory Rex family. Homodimer.

It is found in the cytoplasm. Functionally, modulates transcription in response to changes in cellular NADH/NAD(+) redox state. The protein is Redox-sensing transcriptional repressor Rex of Thermoanaerobacter pseudethanolicus (strain ATCC 33223 / 39E) (Clostridium thermohydrosulfuricum).